Consider the following 377-residue polypeptide: Anhydro-N-acetylmuramic acid kinase (377 aa).

19–26 (GTSLDGVD) provides a ligand contact to ATP.

This sequence belongs to the anhydro-N-acetylmuramic acid kinase family.

It catalyses the reaction 1,6-anhydro-N-acetyl-beta-muramate + ATP + H2O = N-acetyl-D-muramate 6-phosphate + ADP + H(+). It functions in the pathway amino-sugar metabolism; 1,6-anhydro-N-acetylmuramate degradation. It participates in cell wall biogenesis; peptidoglycan recycling. Its function is as follows. Catalyzes the specific phosphorylation of 1,6-anhydro-N-acetylmuramic acid (anhMurNAc) with the simultaneous cleavage of the 1,6-anhydro ring, generating MurNAc-6-P. Is required for the utilization of anhMurNAc either imported from the medium or derived from its own cell wall murein, and thus plays a role in cell wall recycling. The sequence is that of Anhydro-N-acetylmuramic acid kinase from Roseobacter denitrificans (strain ATCC 33942 / OCh 114) (Erythrobacter sp. (strain OCh 114)).